Reading from the N-terminus, the 152-residue chain is Protein NrdI (152 aa).

Belongs to the NrdI family.

Its function is as follows. Probably involved in ribonucleotide reductase function. The protein is Protein NrdI of Mycobacterium sp. (strain JLS).